The chain runs to 182 residues: Transcription termination/antitermination protein NusG (182 aa).

Belongs to the NusG family.

Functionally, participates in transcription elongation, termination and antitermination. This is Transcription termination/antitermination protein NusG from Chlamydia trachomatis serovar D (strain ATCC VR-885 / DSM 19411 / UW-3/Cx).